Reading from the N-terminus, the 425-residue chain is Phosphoribosylamine--glycine ligase (425 aa).

In terms of domain architecture, ATP-grasp spans 110 to 317 (KEFMKRHGIP…LFDALLASVE (208 aa)). ATP is bound at residue 137–198 (ETCPTFPQVI…EAFLSGQEAS (62 aa)). Mg(2+) is bound by residues Glu287 and Asn289.

Belongs to the GARS family. Requires Mg(2+) as cofactor. The cofactor is Mn(2+).

The enzyme catalyses 5-phospho-beta-D-ribosylamine + glycine + ATP = N(1)-(5-phospho-beta-D-ribosyl)glycinamide + ADP + phosphate + H(+). Its pathway is purine metabolism; IMP biosynthesis via de novo pathway; N(1)-(5-phospho-D-ribosyl)glycinamide from 5-phospho-alpha-D-ribose 1-diphosphate: step 2/2. In Chlorobaculum tepidum (strain ATCC 49652 / DSM 12025 / NBRC 103806 / TLS) (Chlorobium tepidum), this protein is Phosphoribosylamine--glycine ligase.